Here is a 223-residue protein sequence, read N- to C-terminus: Protein disulfide-isomerase-like protein EhSep2 (223 aa).

Residues 1-17 (MALRSLTLLCAAAGASA) form the signal peptide. The Thioredoxin domain maps to 18-125 (GAIELTPDNF…DELKKFAENE (108 aa)). Position 47 (Sec47) is a non-standard amino acid, selenocysteine. A coiled-coil region spans residues 155-201 (EKRTEMLETLKKELADAESTHEALLKELQATYKESMDKLEKLKEESA). A disordered region spans residues 201–223 (APKIKLLKAATPAPKAEGAKDEV). The span at 203 to 216 (KIKLLKAATPAPKA) shows a compositional bias: low complexity. The Prevents secretion from ER motif lies at 220 to 223 (KDEV).

It belongs to the protein disulfide isomerase family.

Its subcellular location is the endoplasmic reticulum lumen. In Emiliania huxleyi (Coccolithophore), this protein is Protein disulfide-isomerase-like protein EhSep2 (SEP2).